Reading from the N-terminus, the 162-residue chain is Regulator of sigma D (162 aa).

It belongs to the Rsd/AlgQ family. In terms of assembly, interacts with RpoD.

It localises to the cytoplasm. Its function is as follows. Binds RpoD and negatively regulates RpoD-mediated transcription activation by preventing the interaction between the primary sigma factor RpoD with the catalytic core of the RNA polymerase and with promoter DNA. May be involved in replacement of the RNA polymerase sigma subunit from RpoD to RpoS during the transition from exponential growth to the stationary phase. The protein is Regulator of sigma D of Salmonella paratyphi A (strain ATCC 9150 / SARB42).